Here is a 317-residue protein sequence, read N- to C-terminus: Malate dehydrogenase (317 aa).

Residues 13–18 (GAGNIG) and D38 contribute to the NAD(+) site. Positions 87 and 93 each coordinate substrate. Residues N100 and 123–125 (VTN) each bind NAD(+). Residues N125 and R156 each contribute to the substrate site. H180 acts as the Proton acceptor in catalysis.

The protein belongs to the LDH/MDH superfamily. MDH type 3 family.

It carries out the reaction (S)-malate + NAD(+) = oxaloacetate + NADH + H(+). Catalyzes the reversible oxidation of malate to oxaloacetate. This chain is Malate dehydrogenase, found in Anaplasma marginale (strain Florida).